The following is a 360-amino-acid chain: Histidinol-phosphate aminotransferase (360 aa).

The residue at position 211 (K211) is an N6-(pyridoxal phosphate)lysine.

It belongs to the class-II pyridoxal-phosphate-dependent aminotransferase family. Histidinol-phosphate aminotransferase subfamily. In terms of assembly, homodimer. Pyridoxal 5'-phosphate serves as cofactor.

It catalyses the reaction L-histidinol phosphate + 2-oxoglutarate = 3-(imidazol-4-yl)-2-oxopropyl phosphate + L-glutamate. It functions in the pathway amino-acid biosynthesis; L-histidine biosynthesis; L-histidine from 5-phospho-alpha-D-ribose 1-diphosphate: step 7/9. This Cronobacter sakazakii (strain ATCC BAA-894) (Enterobacter sakazakii) protein is Histidinol-phosphate aminotransferase.